The chain runs to 208 residues: Urease accessory protein UreE (208 aa).

Residues 145–195 (AEAHGHGQAHAHDHHDHDHHDHGHDHAHHDHAHHDHAHDHHGHDHAHDHAH) form a disordered region.

It belongs to the UreE family.

It localises to the cytoplasm. Its function is as follows. Involved in urease metallocenter assembly. Binds nickel. Probably functions as a nickel donor during metallocenter assembly. The sequence is that of Urease accessory protein UreE from Azorhizobium caulinodans (strain ATCC 43989 / DSM 5975 / JCM 20966 / LMG 6465 / NBRC 14845 / NCIMB 13405 / ORS 571).